The sequence spans 34 residues: Photosystem II reaction center protein M (34 aa).

A helical membrane pass occupies residues Ile5–Ile25.

Belongs to the PsbM family. In terms of assembly, PSII is composed of 1 copy each of membrane proteins PsbA, PsbB, PsbC, PsbD, PsbE, PsbF, PsbH, PsbI, PsbJ, PsbK, PsbL, PsbM, PsbT, PsbX, PsbY, PsbZ, Psb30/Ycf12, at least 3 peripheral proteins of the oxygen-evolving complex and a large number of cofactors. It forms dimeric complexes.

The protein localises to the plastid. Its subcellular location is the chloroplast thylakoid membrane. Functionally, one of the components of the core complex of photosystem II (PSII). PSII is a light-driven water:plastoquinone oxidoreductase that uses light energy to abstract electrons from H(2)O, generating O(2) and a proton gradient subsequently used for ATP formation. It consists of a core antenna complex that captures photons, and an electron transfer chain that converts photonic excitation into a charge separation. This subunit is found at the monomer-monomer interface. The polypeptide is Photosystem II reaction center protein M (Citrus sinensis (Sweet orange)).